The following is a 246-amino-acid chain: MRRVAIEFSYDGTDFFGYQIQNNVRTVQGELEKALEKVFKIHIDTYAAGRTDTGVHANGQVVSFDCPNDRLMENDIKNAINANLPGDIYIKKVWFTHPTFNPRYEAKRRIYHYYIDTSKSKNLFTRRYVWWFPYELDIEKMRIAAKYLIGEHDFISFSKKGEENTKTIRTINNLRIIEIKNGLILIRVEGISFLRGMVRSIVANLVRVGTGIWEPEKVKEVLESKDRSKSAGLAPAHGLFLYKVLF.

The Nucleophile role is filled by Asp52. Tyr111 contributes to the substrate binding site.

Belongs to the tRNA pseudouridine synthase TruA family. As to quaternary structure, homodimer.

It catalyses the reaction uridine(38/39/40) in tRNA = pseudouridine(38/39/40) in tRNA. In terms of biological role, formation of pseudouridine at positions 38, 39 and 40 in the anticodon stem and loop of transfer RNAs. This Fervidobacterium nodosum (strain ATCC 35602 / DSM 5306 / Rt17-B1) protein is tRNA pseudouridine synthase A.